A 98-amino-acid polypeptide reads, in one-letter code: N(2)-fixation sustaining protein CowN (98 aa).

Belongs to the CowN family.

Its function is as follows. Is required to sustain N(2)-dependent growth in the presence of low levels of carbon monoxide (CO). Probably acts by protecting the N(2) fixation ability of the nitrogenase complex, which is inactivated in the presence of CO. The chain is N(2)-fixation sustaining protein CowN from Paramagnetospirillum magneticum (strain ATCC 700264 / AMB-1) (Magnetospirillum magneticum).